A 495-amino-acid chain; its full sequence is L-arabinose isomerase (495 aa).

Positions 305, 332, 349, and 448 each coordinate Mn(2+).

It belongs to the arabinose isomerase family. It depends on Mn(2+) as a cofactor.

It catalyses the reaction beta-L-arabinopyranose = L-ribulose. The protein operates within carbohydrate degradation; L-arabinose degradation via L-ribulose; D-xylulose 5-phosphate from L-arabinose (bacterial route): step 1/3. Functionally, catalyzes the conversion of L-arabinose to L-ribulose. The polypeptide is L-arabinose isomerase (Mannheimia succiniciproducens (strain KCTC 0769BP / MBEL55E)).